Here is a 42-residue protein sequence, read N- to C-terminus: Photosystem I reaction center subunit IX (42 aa).

A helical membrane pass occupies residues 7–27; it reads YLSTAPVLAAIWFAILAGLLI.

This sequence belongs to the PsaJ family.

The protein resides in the plastid. The protein localises to the chloroplast thylakoid membrane. May help in the organization of the PsaE and PsaF subunits. In Zygnema circumcarinatum (Green alga), this protein is Photosystem I reaction center subunit IX.